Reading from the N-terminus, the 488-residue chain is Beta-1,3-glucan-binding protein (488 aa).

An N-terminal signal peptide occupies residues 1-17 (MFVTFICFLACLTCSYG). The tract at residues 18-135 (QPRAQQYVVP…GTPADTSLEP (118 aa)) is binds to curdlan, laminarihexaose and laminarin. The complex formation with laminarin induces self-association of the complexes into a macro structure, likely containing six protein and three laminarin molecules. The macro structures may form a platform on a microbial surface for recruitment of downstream proteases, as a means of amplification of the initial signal of pathogen recognition for the activation of the phenoloxidase cascade. Residues 18 to 198 (QPRAQQYVVP…LKDLANWEAE (181 aa)) are binds to curdlan, lipopolysaccharide and lipoteichoic acid, activates the phenoloxidase cascade and is resistant to proteolytic degradation by trypsin or chymotrypsin, but is not as effective as the full-length protein in aggregation of microorganisms. A CBM39 domain is found at 24 to 123 (YVVPSAKLEA…GEWTVTEFVN (100 aa)). The tract at residues 24-127 (YVVPSAKLEA…VTEFVNEDGT (104 aa)) is binds to laminarihexaose and laminarin. Substrate is bound by residues Asp-72, 99-101 (WTY), and Arg-110. Residues 125-158 (DGTPADTSLEPTTAPTPVRPDQPNQPIPTHRPDP) form a disordered region. The segment covering 129-139 (ADTSLEPTTAP) has biased composition (polar residues). A compositionally biased stretch (pro residues) spans 141-150 (PVRPDQPNQP). The GH16 domain occupies 144–488 (PDQPNQPIPT…KVDYVRVYAL (345 aa)). Residues 199-488 (VKFPEEPDYP…KVDYVRVYAL (290 aa)) are binds to laminarin, but not to curdlan, does not activate the phenoloxidase cascade, is susceptible to proteinase digestion by trypsin or chymotrypsin and does not cause aggregation of microorganisms. N-linked (GlcNAc...) asparagine glycosylation is found at Asn-373 and Asn-453.

Belongs to the insect beta-1,3-glucan binding protein family. Monomer. The N-terminus is blocked. In terms of tissue distribution, fat body and hemolymph.

The protein localises to the secreted. Functionally, involved in the recognition of invading microorganisms causing their aggregation. Activates the phenoloxidase cascade. Binds specifically to beta-1,3-glucan. Binds to curdlan, a linear water-insoluble beta-1,3-glucan polysaccharide, and to laminarin, a water-soluble beta-1,3-glucan polysaccharide containing beta-1,6 branches. Also binds to lipopolysaccharide and lipoteichoic acid. In Plodia interpunctella (Indianmeal moth), this protein is Beta-1,3-glucan-binding protein.